The chain runs to 200 residues: Adenylate kinase (200 aa).

10-15 serves as a coordination point for ATP; sequence GAGKGT. Positions 30-59 are NMP; sequence STGDMLRAAVAAETPVGLEAKAIMESGGLV. AMP contacts are provided by residues Thr31, Arg36, 57–59, 85–88, and Gln92; these read GLV and GFPR. The LID stretch occupies residues 126 to 142; sequence KRAEETAARGQPVRKDD. Arg127 contacts ATP. Residues Arg139 and Arg150 each contribute to the AMP site. Lys178 serves as a coordination point for ATP.

Belongs to the adenylate kinase family. As to quaternary structure, monomer.

Its subcellular location is the cytoplasm. The enzyme catalyses AMP + ATP = 2 ADP. Its pathway is purine metabolism; AMP biosynthesis via salvage pathway; AMP from ADP: step 1/1. Functionally, catalyzes the reversible transfer of the terminal phosphate group between ATP and AMP. Plays an important role in cellular energy homeostasis and in adenine nucleotide metabolism. This is Adenylate kinase from Methylorubrum extorquens (strain CM4 / NCIMB 13688) (Methylobacterium extorquens).